We begin with the raw amino-acid sequence, 269 residues long: Gem-associated protein 2 (269 aa).

Residues S70 and S155 each carry the phosphoserine modification.

It belongs to the gemin-2 family. As to quaternary structure, monomer. Part of the core SMN complex that contains SMN1, GEMIN2/SIP1, DDX20/GEMIN3, GEMIN4, GEMIN5, GEMIN6, GEMIN7, GEMIN8 and STRAP/UNRIP. Part of the SMN-Sm complex that contains SMN1, GEMIN2/SIP1, DDX20/GEMIN3, GEMIN4, GEMIN5, GEMIN6, GEMIN7, GEMIN8, STRAP/UNRIP and the Sm proteins SNRPB, SNRPD1, SNRPD2, SNRPD3, SNRPE, SNRPF and SNRPG. Interacts with GEMIN5; the interaction is direct. Interacts (via C-terminus) with SMN1; the interaction is direct. Interacts with SNRPD1; the interaction is direct. Interacts with SNRPD2; the interaction is direct. Interacts (via N-terminus) with SNRPF; the interaction is direct. Interacts (via N-terminus) with SNRPE; the interaction is direct. Interacts (via N-terminus) with SNRPG; the interaction is direct.

It is found in the nucleus. The protein resides in the gem. Its subcellular location is the cytoplasm. Functionally, the SMN complex catalyzes the assembly of small nuclear ribonucleoproteins (snRNPs), the building blocks of the spliceosome, and thereby plays an important role in the splicing of cellular pre-mRNAs. Most spliceosomal snRNPs contain a common set of Sm proteins SNRPB, SNRPD1, SNRPD2, SNRPD3, SNRPE, SNRPF and SNRPG that assemble in a heptameric protein ring on the Sm site of the small nuclear RNA to form the core snRNP (Sm core). In the cytosol, the Sm proteins SNRPD1, SNRPD2, SNRPE, SNRPF and SNRPG (5Sm) are trapped in an inactive 6S pICln-Sm complex by the chaperone CLNS1A that controls the assembly of the core snRNP. To assemble core snRNPs, the SMN complex accepts the trapped 5Sm proteins from CLNS1A. Binding of snRNA inside 5Sm ultimately triggers eviction of the SMN complex, thereby allowing binding of SNRPD3 and SNRPB to complete assembly of the core snRNP. Within the SMN complex, GEMIN2 constrains the conformation of 5Sm, thereby promoting 5Sm binding to snRNA containing the snRNP code (a nonameric Sm site and a 3'-adjacent stem-loop), thus preventing progression of assembly until a cognate substrate is bound. The protein is Gem-associated protein 2 of Mus musculus (Mouse).